Here is an 86-residue protein sequence, read N- to C-terminus: Small ribosomal subunit protein bS18 (86 aa).

This sequence belongs to the bacterial ribosomal protein bS18 family. As to quaternary structure, part of the 30S ribosomal subunit. Forms a tight heterodimer with protein bS6.

Binds as a heterodimer with protein bS6 to the central domain of the 16S rRNA, where it helps stabilize the platform of the 30S subunit. The polypeptide is Small ribosomal subunit protein bS18 (Campylobacter lari (strain RM2100 / D67 / ATCC BAA-1060)).